The following is a 250-amino-acid chain: Acetylglutamate kinase (250 aa).

Substrate-binding positions include 41-42, arginine 63, and asparagine 156; that span reads GG.

It belongs to the acetylglutamate kinase family. ArgB subfamily.

It is found in the cytoplasm. The catalysed reaction is N-acetyl-L-glutamate + ATP = N-acetyl-L-glutamyl 5-phosphate + ADP. It functions in the pathway amino-acid biosynthesis; L-arginine biosynthesis; N(2)-acetyl-L-ornithine from L-glutamate: step 2/4. Catalyzes the ATP-dependent phosphorylation of N-acetyl-L-glutamate. The polypeptide is Acetylglutamate kinase (Listeria monocytogenes serotype 4a (strain HCC23)).